The chain runs to 223 residues: Urease accessory protein UreF (223 aa).

The protein belongs to the UreF family. In terms of assembly, ureD, UreF and UreG form a complex that acts as a GTP-hydrolysis-dependent molecular chaperone, activating the urease apoprotein by helping to assemble the nickel containing metallocenter of UreC. The UreE protein probably delivers the nickel.

Its subcellular location is the cytoplasm. Its function is as follows. Required for maturation of urease via the functional incorporation of the urease nickel metallocenter. This chain is Urease accessory protein UreF, found in Rhizobium etli (strain CIAT 652).